The following is an 80-amino-acid chain: Conotoxin ArMKLT2-0321 (80 aa).

An N-terminal signal peptide occupies residues 1–21 (MKLTCVLIIAMLFLIVCQLNT). A propeptide spanning residues 22–48 (ADDSTDKQEYRAVKLRDAMRNFKGSKR) is cleaved from the precursor. Disulfide bonds link Cys-50/Cys-63, Cys-57/Cys-68, and Cys-62/Cys-77.

It belongs to the conotoxin O1 superfamily. In terms of tissue distribution, expressed by the venom duct.

Its subcellular location is the secreted. The chain is Conotoxin ArMKLT2-0321 from Conus arenatus (Sand-dusted cone).